Reading from the N-terminus, the 369-residue chain is Endophilin-A (369 aa).

The BAR domain occupies 18-248; the sequence is TEKMGGAEGT…LQEKRSEAES (231 aa). The stretch at 227–247 forms a coiled coil; it reads QCADVLRGLQETLQEKRSEAE. Positions 266 to 295 are disordered; that stretch reads GGGGGLNEDGTPSHISSSASPLPSPMRSPA. A compositionally biased stretch (low complexity) spans 277 to 294; that stretch reads PSHISSSASPLPSPMRSP. The 60-residue stretch at 305 to 364 folds into the SH3 domain; that stretch reads QQQPCCQALYDFEPENPGELAFKENDIITLLNRVDDNWFEGAVNGRTGYFPQSYVQVQVP.

The protein belongs to the endophilin family.

It is found in the cytoplasm. It localises to the membrane. In terms of biological role, required presynaptically at the neuromuscular junction. Implicated in synaptic vesicle endocytosis. In Drosophila erecta (Fruit fly), this protein is Endophilin-A.